A 132-amino-acid polypeptide reads, in one-letter code: Small ribosomal subunit protein eS12 (132 aa).

This sequence belongs to the eukaryotic ribosomal protein eS12 family.

The polypeptide is Small ribosomal subunit protein eS12 (rps12) (Oreochromis niloticus (Nile tilapia)).